The primary structure comprises 155 residues: Ribosome maturation factor RimP (155 aa).

It belongs to the RimP family.

Its subcellular location is the cytoplasm. In terms of biological role, required for maturation of 30S ribosomal subunits. The polypeptide is Ribosome maturation factor RimP (Dichelobacter nodosus (strain VCS1703A)).